Reading from the N-terminus, the 96-residue chain is Keratin-associated protein 12-1 (96 aa).

A run of 14 repeats spans residues 10-14, 15-19, 24-28, 30-34, 35-39, 45-49, 50-54, 55-59, 60-64, 70-74, 75-79, 80-84, 85-89, and 90-94. The 14 X 5 AA approximate repeats stretch occupies residues 10-94; that stretch reads CQPACCAPSP…CRPISCSTPS (85 aa).

It belongs to the KRTAP type 12 family. Interacts with hair keratins. Restricted to a narrow region of the hair fiber cuticle, lying approximately 20 cell layers above the apex of the dermal papilla of the hair root; not detected in any other tissues.

In terms of biological role, in the hair cortex, hair keratin intermediate filaments are embedded in an interfilamentous matrix, consisting of hair keratin-associated proteins (KRTAP), which are essential for the formation of a rigid and resistant hair shaft through their extensive disulfide bond cross-linking with abundant cysteine residues of hair keratins. The matrix proteins include the high-sulfur and high-glycine-tyrosine keratins. The sequence is that of Keratin-associated protein 12-1 (KRTAP12-1) from Homo sapiens (Human).